The chain runs to 1850 residues: Vitellogenin-2 (1850 aa).

The N-terminal stretch at 1–15 is a signal peptide; the sequence is MRGIILALVLTLVGS. A Vitellogenin domain is found at 24–662; it reads FNSRRSYLYN…SPRTMFPSAI (639 aa). Residue asparagine 604 is glycosylated (N-linked (GlcNAc...) asparagine). The interval 935-984 is disordered; that stretch reads DAPLDVTEEPFQTSERASREHFAMQGPDSMPRKQSHSSREDLRRSTGKRA. N-linked (GlcNAc...) asparagine glycosylation is present at asparagine 1094. 2 disordered regions span residues 1115–1313 and 1338–1362; these read GTEP…SSSS and EFPKRKLPGDRATSRYSSTRSSHDT. The span at 1122–1143 shows a compositional bias: low complexity; the sequence is TSSSSSSASSTATSSSSSSASS. Residues 1156–1165 are compositionally biased toward basic and acidic residues; the sequence is DQVKQARNKD. The span at 1167-1266 shows a compositional bias: low complexity; it reads SSSSRSSKSS…SRSSSSSSKS (100 aa). N-linked (GlcNAc...) asparagine glycans are attached at residues asparagine 1177 and asparagine 1188. Residues 1267–1277 are compositionally biased toward basic residues; sequence SSHHSHSHHSG. Over residues 1278-1291 the composition is skewed to low complexity; that stretch reads HLNGSSSSSSSSRS. A glycan (N-linked (GlcNAc...) asparagine) is linked at asparagine 1280. Residues 1338–1350 show a composition bias toward basic and acidic residues; sequence EFPKRKLPGDRAT. N-linked (GlcNAc...) asparagine glycosylation is found at asparagine 1417, asparagine 1597, and asparagine 1665. Residues 1579–1756 form the VWFD domain; it reads ARCSVSYNKI…SWILEEAPCR (178 aa). Cystine bridges form between cysteine 1581–cysteine 1719 and cysteine 1604–cysteine 1755.

In terms of processing, phosvitin, an egg yolk storage protein, is one of the most highly phosphorylated (10%) proteins in nature. Cathepsin D is responsible for intraoocytic processing of vitellogenin. Post-translationally, may contain intrachain disulfide bonds. After incorporation from serum via a specific receptor, it is cleaved into four fragments, heavy and light chain lipovitellins, phosphovitin and YGP40, and YGP40 is released into the yolk plasma before or during compartmentation of lipovitellin-phosvitin complex into the yolk granule.

In terms of biological role, precursor of the major egg-yolk proteins that are sources of nutrients during early development of oviparous organisms. Phosvitin is believed to be of importance in sequestering calcium, iron and other cations for the developing embryo. The polypeptide is Vitellogenin-2 (VTG2) (Gallus gallus (Chicken)).